The primary structure comprises 225 residues: Transcriptional regulatory protein AfsQ1 (225 aa).

In terms of domain architecture, Response regulatory spans 3–116 (SLLLIEDDDA…VLDARIRAVL (114 aa)). Asp52 bears the 4-aspartylphosphate mark. The ompR/PhoB-type DNA-binding region spans 124 to 223 (TDSASFGSLV…VRGVGYRLDP (100 aa)).

Post-translationally, phosphorylated by AfsQ2.

It is found in the cytoplasm. The protein resides in the nucleoid. In terms of biological role, forms part of a two-component regulatory system AfsQ1/AfsQ2 involved in secondary metabolism. The sequence is that of Transcriptional regulatory protein AfsQ1 from Streptomyces coelicolor (strain ATCC BAA-471 / A3(2) / M145).